Consider the following 251-residue polypeptide: Tyrosine transport ATP-binding protein (251 aa).

In terms of domain architecture, ABC transporter spans 2–248; it reads LQIKNLSKSF…TVEEILEKFE (247 aa). Residue 39–46 coordinates ATP; that stretch reads GSNGTGKS.

This sequence belongs to the ABC transporter superfamily. The complex is probably composed of two ATP-binding proteins (CDR20291_0806), two transmembrane proteins (CDR20291_0807) and a solute-binding protein (CDR20291_0805).

The protein localises to the cell membrane. The catalysed reaction is L-tyrosine(out) + ATP + H2O = L-tyrosine(in) + ADP + phosphate + H(+). Its function is as follows. Probably part of an ABC transporter complex involved in tyrosine uptake. May also import phenylalanine. Probably responsible for energy coupling to the transport system. This is Tyrosine transport ATP-binding protein from Clostridioides difficile (strain R20291) (Peptoclostridium difficile).